The following is a 320-amino-acid chain: MPFWYRPVTWAWLLLPLALLFKMISFCRRLAYQKGFFKRYKSKLPVIIVGNISVGGNGKTPFVIWLCEMLITVGYKPAVISRGYGGKSNHYPLLVGDHIKGHEAGDEPVLIHKRLGIPVVVDPNRKNAVKYIEQHFLADIIISDDGLQHYALQRDIEIVIVDGKRRFGNQHLMPIGPLRENLSRLNSVDFVVNNGGQQVNEITMLLKAQNCQRVDGETAQLSSGVQVNACAAIGYPQRFFDTLNQQQFEILKAVGFNDHHAFSKDDFTQFEASIPLLMTEKDAVKCTDFAQPNWWYLPVSAEFSAGFEQQLLNRIKEIKC.

53 to 60 (SVGGNGKT) contributes to the ATP binding site.

Belongs to the LpxK family.

It catalyses the reaction a lipid A disaccharide + ATP = a lipid IVA + ADP + H(+). It participates in glycolipid biosynthesis; lipid IV(A) biosynthesis; lipid IV(A) from (3R)-3-hydroxytetradecanoyl-[acyl-carrier-protein] and UDP-N-acetyl-alpha-D-glucosamine: step 6/6. In terms of biological role, transfers the gamma-phosphate of ATP to the 4'-position of a tetraacyldisaccharide 1-phosphate intermediate (termed DS-1-P) to form tetraacyldisaccharide 1,4'-bis-phosphate (lipid IVA). This chain is Tetraacyldisaccharide 4'-kinase, found in Psychromonas ingrahamii (strain DSM 17664 / CCUG 51855 / 37).